A 394-amino-acid chain; its full sequence is Ceramide glucosyltransferase-A (394 aa).

Topologically, residues 1–10 (MAVLDLALQG) are lumenal. The helical transmembrane segment at 11 to 32 (LAIFGCVLFFVLWFMHFLSIVY) threads the bilayer. Topologically, residues 33-195 (TRLHLNKKIS…QVYFGTSHPR (163 aa)) are cytoplasmic. Position 92 (D92) is a short sequence motif, D1. Position 144 (D144) is a short sequence motif, D2. A helical transmembrane segment spans residues 196–215 (SYISANVTGFKCVTGMSCLM). Residues 216 to 287 (RKEVLDQAGG…KLRINMLPAT (72 aa)) are Lumenal-facing. Position 236 (D236) is a short sequence motif, D3. Residue D236 is the Proton acceptor of the active site. Positions 272–276 (RMIRW) match the (Q/R)XXRW motif. Residues 288–304 (IICEPISECFVASLIIG) traverse the membrane as a helical segment. The Cytoplasmic portion of the chain corresponds to 305–309 (WAAHH). Residues 310-328 (IFRWDIMVFFMCHCLAWFI) form a helical membrane-spanning segment. At 329-348 (FDYIQLRGVQGGPLNFSKLD) the chain is on the lumenal side. Residues 349–369 (YAVAWFIRESMTIYIFLSALW) form a helical membrane-spanning segment. The Cytoplasmic segment spans residues 370-394 (DPTISWRTGRFRLRCGGTAEEILDV).

This sequence belongs to the glycosyltransferase 2 family. At the late gastrula stage, weakly expressed ubiquitously. As neurulation proceeds (stages 15-16), expression moves towards the dorsal structures: involuted paraxial mesoderm and neural folds. In the tailbud embryo (stage 28), expression is restricted to the notochord. At later stages (stage 35), expression remains in the notochord and also appears weakly in the cephalic region.

It localises to the golgi apparatus membrane. The catalysed reaction is an N-acylsphing-4-enine + UDP-alpha-D-glucose = a beta-D-glucosyl-(1&lt;-&gt;1')-N-acylsphing-4-enine + UDP + H(+). The enzyme catalyses UDP-alpha-D-xylose + an N-acylsphing-4-enine = a beta-D-xylosyl-(1&lt;-&gt;1')-N-acylsphing-4-enine + UDP + H(+). It catalyses the reaction N-(9Z-octadecenoyl)-sphing-4-enine + UDP-alpha-D-xylose = beta-D-xylosyl-(1&lt;-&gt;1')-N-(9Z-octadecenoyl)-sphing-4-enine + UDP + H(+). The protein operates within lipid metabolism; sphingolipid metabolism. In terms of biological role, participates in the initial step of the glucosylceramide-based glycosphingolipid/GSL synthetic pathway at the cytosolic surface of the Golgi. Catalyzes the transfer of glucose from UDP-glucose to ceramide to produce glucosylceramide/GlcCer (such as beta-D-glucosyl-(1&lt;-&gt;1')-N-acylsphing-4-enine). Glucosylceramide is the core component of glycosphingolipids/GSLs, amphipathic molecules consisting of a ceramide lipid moiety embedded in the outer leaflet of the membrane, linked to one of hundreds of different externally oriented oligosaccharide structures. Glycosphingolipids are essential components of membrane microdomains that mediate membrane trafficking and signal transduction. They are implicated in many fundamental cellular processes, including growth, differentiation, migration, morphogenesis, cell-to-cell and cell-to-matrix interactions. Glycosphingolipids are required for convergence extension movements during early development. Catalyzes the synthesis of xylosylceramide/XylCer (such as beta-D-xylosyl-(1&lt;-&gt;1')-N-acylsphing-4-enine) using UDP-Xyl as xylose donor. This Xenopus laevis (African clawed frog) protein is Ceramide glucosyltransferase-A (ugcg-a).